Here is a 399-residue protein sequence, read N- to C-terminus: Phosphoglycerate kinase (399 aa).

Substrate is bound by residues 22-24, R37, 60-63, R119, and R152; these read DLN and HFGR. ATP contacts are provided by residues K202, E324, and 354–357; that span reads GGDT.

Belongs to the phosphoglycerate kinase family. In terms of assembly, monomer.

It localises to the cytoplasm. It catalyses the reaction (2R)-3-phosphoglycerate + ATP = (2R)-3-phospho-glyceroyl phosphate + ADP. It functions in the pathway carbohydrate degradation; glycolysis; pyruvate from D-glyceraldehyde 3-phosphate: step 2/5. This is Phosphoglycerate kinase from Sinorhizobium medicae (strain WSM419) (Ensifer medicae).